We begin with the raw amino-acid sequence, 185 residues long: Ribosome-recycling factor (185 aa).

It belongs to the RRF family.

It localises to the cytoplasm. Its function is as follows. Responsible for the release of ribosomes from messenger RNA at the termination of protein biosynthesis. May increase the efficiency of translation by recycling ribosomes from one round of translation to another. The sequence is that of Ribosome-recycling factor from Thioalkalivibrio sulfidiphilus (strain HL-EbGR7).